The sequence spans 360 residues: Phospho-N-acetylmuramoyl-pentapeptide-transferase (360 aa).

10 consecutive transmembrane segments (helical) span residues 21-41 (YLTLRGILGILTALVISFIVG), 70-90 (GTPTMGGALILVTITVSTLLW), 97-117 (YVWAVLLVTLAYGLIGFVDDY), 134-154 (YLWQSVFGLGAALFLYHTASS), 168-188 (VVLNMGWLYVPLVYFVVVGSS), 199-219 (GLAILPTVLVAGGLAIFAYAS), 236-256 (AGELVVFCGALVGAGLGFLWF), 263-283 (VFMGDIGALALGAALGMVAVL), 288-308 (IVLMIMGGIFVMETVSVMLQV), and 338-358 (VIVRFWIISVILVLIGLATLK).

The protein belongs to the glycosyltransferase 4 family. MraY subfamily. It depends on Mg(2+) as a cofactor.

It is found in the cell inner membrane. It catalyses the reaction UDP-N-acetyl-alpha-D-muramoyl-L-alanyl-gamma-D-glutamyl-meso-2,6-diaminopimeloyl-D-alanyl-D-alanine + di-trans,octa-cis-undecaprenyl phosphate = di-trans,octa-cis-undecaprenyl diphospho-N-acetyl-alpha-D-muramoyl-L-alanyl-D-glutamyl-meso-2,6-diaminopimeloyl-D-alanyl-D-alanine + UMP. The protein operates within cell wall biogenesis; peptidoglycan biosynthesis. Functionally, catalyzes the initial step of the lipid cycle reactions in the biosynthesis of the cell wall peptidoglycan: transfers peptidoglycan precursor phospho-MurNAc-pentapeptide from UDP-MurNAc-pentapeptide onto the lipid carrier undecaprenyl phosphate, yielding undecaprenyl-pyrophosphoryl-MurNAc-pentapeptide, known as lipid I. This is Phospho-N-acetylmuramoyl-pentapeptide-transferase from Methylococcus capsulatus (strain ATCC 33009 / NCIMB 11132 / Bath).